A 60-amino-acid chain; its full sequence is Metallothionein B (60 aa).

A beta region spans residues methionine 1–cysteine 28. A divalent metal cation is bound by residues cysteine 4, cysteine 6, cysteine 12, cysteine 14, cysteine 18, cysteine 20, cysteine 23, cysteine 25, cysteine 28, cysteine 32, cysteine 33, cysteine 35, cysteine 36, cysteine 40, cysteine 43, cysteine 47, cysteine 49, cysteine 54, cysteine 58, and cysteine 59. The tract at residues lysine 29 to glutamine 60 is alpha.

This sequence belongs to the metallothionein superfamily. Type 1 family.

Functionally, metallothioneins have a high content of cysteine residues that bind various heavy metals. The sequence is that of Metallothionein B (mtb) from Trematomus bernacchii (Emerald rockcod).